We begin with the raw amino-acid sequence, 302 residues long: Oxygen-dependent coproporphyrinogen-III oxidase (302 aa).

Ser94 contacts substrate. The a divalent metal cation site is built by His98 and His108. Residue His108 is the Proton donor of the active site. Residue 110-112 (NVR) participates in substrate binding. Residues His147 and His177 each contribute to the a divalent metal cation site. The important for dimerization stretch occupies residues 242-277 (YVEFNLVYDRGTLFGLQTGGRTESILMSMPPLVRWQ). Substrate is bound at residue 260–262 (GGR).

This sequence belongs to the aerobic coproporphyrinogen-III oxidase family. As to quaternary structure, homodimer. It depends on a divalent metal cation as a cofactor.

It localises to the cytoplasm. It catalyses the reaction coproporphyrinogen III + O2 + 2 H(+) = protoporphyrinogen IX + 2 CO2 + 2 H2O. Its pathway is porphyrin-containing compound metabolism; protoporphyrin-IX biosynthesis; protoporphyrinogen-IX from coproporphyrinogen-III (O2 route): step 1/1. Functionally, involved in the heme biosynthesis. Catalyzes the aerobic oxidative decarboxylation of propionate groups of rings A and B of coproporphyrinogen-III to yield the vinyl groups in protoporphyrinogen-IX. The protein is Oxygen-dependent coproporphyrinogen-III oxidase of Shewanella sp. (strain MR-4).